We begin with the raw amino-acid sequence, 477 residues long: Phosphatidylinositol 4-kinase type 2-beta (477 aa).

The disordered stretch occupies residues 1-80 (MPEPPRDIMA…EDRSISASLS (80 aa)). Phosphoserine is present on Ser45. The PI3K/PI4K catalytic domain occupies 116-447 (GVFPERISQG…AQMPCVIVEC (332 aa)). The G-loop stretch occupies residues 122–128 (ISQGSSG). 2 residues coordinate ATP: Ser129 and Lys144. The interval 149–151 (EPY) is important for substrate binding. An important for interaction with membranes region spans residues 157-170 (KWTKYVHKVCCPCC). ATP contacts are provided by residues 253-256 (QLFV) and 267-268 (RR). An important for interaction with membranes region spans residues 260–268 (KEAEYWLRR). The interval 297–305 (RNTDRGNDN) is catalytic loop. Residues 338–358 (AIDNGLAFPFKHPDEWRAYPF) form an activation loop region. Asp340 serves as a coordination point for ATP. Residues 353-362 (WRAYPFHWAW) are important for interaction with membranes.

It belongs to the PI3/PI4-kinase family. Type II PI4K subfamily.

Its subcellular location is the cytoplasm. The protein localises to the cytosol. The protein resides in the golgi apparatus membrane. It is found in the endoplasmic reticulum membrane. It localises to the cell membrane. Its subcellular location is the early endosome membrane. It carries out the reaction a 1,2-diacyl-sn-glycero-3-phospho-(1D-myo-inositol) + ATP = a 1,2-diacyl-sn-glycero-3-phospho-(1D-myo-inositol 4-phosphate) + ADP + H(+). Its function is as follows. Together with PI4K2A and the type III PI4Ks (PIK4CA and PIK4CB) it contributes to the overall PI4-kinase activity of the cell. This contribution may be especially significant in plasma membrane, endosomal and Golgi compartments. The phosphorylation of phosphatidylinositol (PI) to PI4P is the first committed step in the generation of phosphatidylinositol 4,5-bisphosphate (PIP2), a precursor of the second messenger inositol 1,4,5-trisphosphate (InsP3). Contributes to the production of InsP3 in stimulated cells and is likely to be involved in the regulation of vesicular trafficking. This Rattus norvegicus (Rat) protein is Phosphatidylinositol 4-kinase type 2-beta (Pi4k2b).